A 1520-amino-acid polypeptide reads, in one-letter code: Myosin-5 (1520 aa).

The region spanning 7–56 is the Myosin N-terminal SH3-like domain; sequence IVGSHVWVEDPHLAWIDGEVTRIDGINVHVKTKKGKTVVTNVYFPKDTEA. Positions 59 to 729 constitute a Myosin motor domain; sequence GGVDDMTKLS…QMAELDARRA (671 aa). Residues 153–160 and 206–214 each bind ATP; these read GESGAGKT and NNNSSRFGK. 4 actin-binding regions span residues 492 to 526, 528 to 551, 586 to 610, and 610 to 632; these read LIEKKPGGIISLLDEACMFPKSTHETFSQKLFQTF, EHERFAKPKLSRTDFTISHYAGEV, FHALHEDSSRSSKFSSIGSRFKQQL, and LHSLMESLNGTEPHYIRCIKPNN. IQ domains lie at 732 to 761, 755 to 784, 780 to 809, 803 to 832, 828 to 857, and 851 to 880; these read LGNAARVIQRQFRTCMARKNYRSIRNAAIV, IRNAAIVLQSFLRGEIARAVHKKLRIEAAA, IEAAALRVQKNFRRYVDRKSFVTTRSSTIV, TRSSTIVLQTGLRAMIARSEFRLRRQRKAA, QRKAAIVLQAHWRGRQAFSYYTRLQKAAIV, and LQKAAIVTQCAWRCRLARRELRMLKMAARD. Positions 881–1047 form a coiled coil; it reads TGALKDAKNK…ESENKVLRQQ (167 aa). Residues 1062–1100 are disordered; it reads PKTTIIQRTPEKDTFSNGETTQLQEPETEDRPQKSLNQK. Polar residues predominate over residues 1076 to 1086; that stretch reads FSNGETTQLQE. Residues 1148-1463 form the Dilute domain; the sequence is NRIIETIASA…IATMRAEVSD (316 aa).

It belongs to the TRAFAC class myosin-kinesin ATPase superfamily. Myosin family. Plant myosin class XI subfamily. In terms of assembly, homodimer. Interacts with MYOB1 and MYOB2. Interacts with PHOX1.

The protein localises to the cytoplasm. Myosin heavy chain that is required for the cell cycle-regulated transport of various organelles and proteins for their segregation. Functions by binding with its tail domain to receptor proteins on organelles and exerting force with its N-terminal motor domain against actin filaments, thereby transporting its cargo along polarized actin cables. Contributes to the trafficking of Golgi stacks, mitochondria and peroxisomes. Required for development of pavement cells, trichomes, and stigmatic papillae. This chain is Myosin-5 (XI-1), found in Arabidopsis thaliana (Mouse-ear cress).